A 299-amino-acid polypeptide reads, in one-letter code: Taste receptor type 2 member 4 (299 aa).

Residues 1-9 (MLWLFYSSA) lie on the Extracellular side of the membrane. The chain crosses the membrane as a helical span at residues 10–30 (IIASVILDFVGIIMSLFITVV). Over 31-46 (NYKTWVKSHRISSSER) the chain is Cytoplasmic. The chain crosses the membrane as a helical span at residues 47–67 (ILFSLGITRFFMLALFLVNTI). Residues 68 to 81 (YFVSSNKERSVYLS) lie on the Extracellular side of the membrane. Residues 82–102 (AFFVLCFMFLDSSSLWFVTLL) form a helical membrane-spanning segment. Residues 103-131 (NSLYCVKITNFQHSVFLLLKRNISPKIPR) are Cytoplasmic-facing. The helical transmembrane segment at 132–152 (LLPACVLISAFTTCLYITLSQ) threads the bilayer. Residues 153–172 (ASPFPELVTKRNNTSFNISE) lie on the Extracellular side of the membrane. N164, N165, and N169 each carry an N-linked (GlcNAc...) asparagine glycan. A helical membrane pass occupies residues 173–193 (GILSLVVSFVLSSSLQFIINV). Topologically, residues 194–230 (TSASLLIYSLRRHIRKMQKNATGFWNPQTEAHVGAMK) are cytoplasmic. Residues 231–251 (LMIYFLILYIPYSVATLVQYL) traverse the membrane as a helical segment. At 252 to 262 (PFYAGMDMGTK) the chain is on the extracellular side. Residues 263–283 (SICLIFATLYSPGHSVLIIIT) form a helical membrane-spanning segment. Topologically, residues 284-299 (HPKLKTTAKKILCFKK) are cytoplasmic.

Belongs to the G-protein coupled receptor T2R family.

The protein resides in the membrane. It is found in the cell projection. The protein localises to the cilium membrane. Its function is as follows. Gustducin-coupled receptor implicated in the perception of bitter compounds in the oral cavity and the gastrointestinal tract. Signals through PLCB2 and the calcium-regulated cation channel TRPM5. In airway epithelial cells, binding of denatonium increases the intracellular calcium ion concentration and stimulates ciliary beat frequency. The sequence is that of Taste receptor type 2 member 4 (TAS2R4) from Papio hamadryas (Hamadryas baboon).